Consider the following 300-residue polypeptide: uncharacterized protein (300 aa).

Positions 1 to 19 (MATKRAHPEDETHESKRAA) are enriched in basic and acidic residues. A disordered region spans residues 1–20 (MATKRAHPEDETHESKRAAQ).

This is an uncharacterized protein from Orgyia pseudotsugata multicapsid polyhedrosis virus (OpMNPV).